Reading from the N-terminus, the 375-residue chain is tRNA-specific 2-thiouridylase MnmA (375 aa).

Residues 12 to 19 (GMSGGVDS) and Met38 contribute to the ATP site. The interaction with target base in tRNA stretch occupies residues 98 to 100 (NPD). The active-site Nucleophile is the Cys103. A disulfide bridge links Cys103 with Cys200. ATP is bound at residue Gly127. Residues 150 to 152 (KDQ) are interaction with tRNA. The Cysteine persulfide intermediate role is filled by Cys200. The tract at residues 312–313 (RY) is interaction with tRNA.

The protein belongs to the MnmA/TRMU family.

Its subcellular location is the cytoplasm. The catalysed reaction is S-sulfanyl-L-cysteinyl-[protein] + uridine(34) in tRNA + AH2 + ATP = 2-thiouridine(34) in tRNA + L-cysteinyl-[protein] + A + AMP + diphosphate + H(+). Functionally, catalyzes the 2-thiolation of uridine at the wobble position (U34) of tRNA, leading to the formation of s(2)U34. The chain is tRNA-specific 2-thiouridylase MnmA from Lactobacillus delbrueckii subsp. bulgaricus (strain ATCC 11842 / DSM 20081 / BCRC 10696 / JCM 1002 / NBRC 13953 / NCIMB 11778 / NCTC 12712 / WDCM 00102 / Lb 14).